A 154-amino-acid polypeptide reads, in one-letter code: MGSKCCKGGPDEDAVERQRRQKLLLAQLHHRKRVKAAGQIQAWWRGVLVRRTLLVAALRAWMIQCWWRTLVQRRIRQRRQALLRVYVIQEQATVKLQSCIRMWQCRQCYRQMCNALCLFQVPESSLAFQTDGFLQVQYAIPSKQPEFHIEILSI.

Positions glutamine 89–leucine 118 constitute an IQ domain.

The protein is IQ domain-containing protein F3 (IQCF3) of Homo sapiens (Human).